A 30-amino-acid polypeptide reads, in one-letter code: Cycloviolacin-H4 (30 aa).

Residues 1–30 constitute a cross-link (cyclopeptide (Gly-Asn)); that stretch reads GIPCAESCVWIPCTVTALLGCSCSNNVCYN. 3 disulfides stabilise this stretch: Cys-4–Cys-21, Cys-8–Cys-23, and Cys-13–Cys-28.

This is a cyclic peptide.

Its function is as follows. Probably participates in a plant defense mechanism. Has potent hemolytic activity. The sequence is that of Cycloviolacin-H4 from Viola hederacea (Australian violet).